The following is a 226-amino-acid chain: UPF0758 protein Daci_1904 (226 aa).

Residues 104-226 form the MPN domain; it reads ALASPEAVAR…SLSMAGQGML (123 aa). Positions 175, 177, and 188 each coordinate Zn(2+). The short motif at 175-188 is the JAMM motif element; sequence HNHPSGQVQASAAD.

The protein belongs to the UPF0758 family.

The chain is UPF0758 protein Daci_1904 from Delftia acidovorans (strain DSM 14801 / SPH-1).